The following is a 211-amino-acid chain: MAKVRVRQHVNPLSHKYRHPIAPPDWNQVYQDMTQPLHLDIGCARGKFLLQMAQVEPEINFLGIEIRQPLVIEANQERERLGLSNLAFVFGNMNVAPEILLQSLPADKLFWVSIQFPDPWFKQRHSKRRVVQPELVIALAKYMVAGGWVFLQSDVESIALEMTERFQAHPHFVRQHQTPWLEENIFPVPTEREKSTYNKGQPVYRSLFRVR.

S-adenosyl-L-methionine contacts are provided by D40, E65, N92, and D118. The active site involves D118. The substrate site is built by K122 and D154.

The protein belongs to the class I-like SAM-binding methyltransferase superfamily. TrmB family.

The enzyme catalyses guanosine(46) in tRNA + S-adenosyl-L-methionine = N(7)-methylguanosine(46) in tRNA + S-adenosyl-L-homocysteine. It participates in tRNA modification; N(7)-methylguanine-tRNA biosynthesis. In terms of biological role, catalyzes the formation of N(7)-methylguanine at position 46 (m7G46) in tRNA. This Microcystis aeruginosa (strain NIES-843 / IAM M-2473) protein is tRNA (guanine-N(7)-)-methyltransferase.